The primary structure comprises 118 residues: Large ribosomal subunit protein bL20 (118 aa).

The protein belongs to the bacterial ribosomal protein bL20 family.

In terms of biological role, binds directly to 23S ribosomal RNA and is necessary for the in vitro assembly process of the 50S ribosomal subunit. It is not involved in the protein synthesizing functions of that subunit. In Salmonella arizonae (strain ATCC BAA-731 / CDC346-86 / RSK2980), this protein is Large ribosomal subunit protein bL20.